The primary structure comprises 897 residues: Probable bifunctional chitinase/lysozyme (897 aa).

The signal sequence occupies residues 1-24 (MKLNIFTKSMIGMGLVCSALPALA). A Chitin-binding type-3 1 domain is found at 25 to 91 (MEAWNNQQGG…SQFGNTLSCE (67 aa)). Disordered regions lie at residues 90–127 (CEKSGSSSSSNSNTPASNTPANGGSATPAQGTVPSNSS), 182–222 (TEIS…PADK), and 287–333 (QYGN…DSVN). Residues 95–111 (SSSSSNSNTPASNTPAN) are compositionally biased toward low complexity. 2 stretches are compositionally biased toward polar residues: residues 113 to 127 (GSATPAQGTVPSNSS) and 182 to 197 (TEISETSNPQSCTSAP). The region spanning 128 to 194 (VVAWNKQQGG…SETSNPQSCT (67 aa)) is the Chitin-binding type-3 2 domain. Residues 198–216 (QPSPDVKPAPDVKPAPDVQ) show a composition bias toward pro residues. The 67-residue stretch at 229-295 (VVAWKGQEGS…SQYGNPGSCS (67 aa)) folds into the Chitin-binding type-3 3 domain. Residues 309-318 (DPTPETPVTP) are compositionally biased toward pro residues. The segment covering 322–333 (NSEPSTPADSVN) has biased composition (polar residues). Chitin-binding type-3 domains follow at residues 337 to 403 (LQAW…TTCE) and 459 to 529 (AKAW…PQFN). Residues 586 to 877 (KHVYAPYVDF…TNLSPEFHGL (292 aa)) enclose the GH18 domain. C628 and C673 are disulfide-bonded. E700 acts as the Proton donor in catalysis.

This sequence belongs to the glycosyl hydrolase 18 family. Chitinase class II subfamily.

The protein resides in the periplasm. The catalysed reaction is Random endo-hydrolysis of N-acetyl-beta-D-glucosaminide (1-&gt;4)-beta-linkages in chitin and chitodextrins.. The enzyme catalyses Hydrolysis of (1-&gt;4)-beta-linkages between N-acetylmuramic acid and N-acetyl-D-glucosamine residues in a peptidoglycan and between N-acetyl-D-glucosamine residues in chitodextrins.. Bifunctional enzyme with lysozyme/chitinase activity. The protein is Probable bifunctional chitinase/lysozyme (chiA) of Escherichia coli (strain K12).